Consider the following 330-residue polypeptide: DNA-directed RNA polymerase subunit alpha (330 aa).

Residues M1–N225 are alpha N-terminal domain (alpha-NTD). The alpha C-terminal domain (alpha-CTD) stretch occupies residues V237–A330.

The protein belongs to the RNA polymerase alpha chain family. In terms of assembly, homodimer. The RNAP catalytic core consists of 2 alpha, 1 beta, 1 beta' and 1 omega subunit. When a sigma factor is associated with the core the holoenzyme is formed, which can initiate transcription.

It carries out the reaction RNA(n) + a ribonucleoside 5'-triphosphate = RNA(n+1) + diphosphate. DNA-dependent RNA polymerase catalyzes the transcription of DNA into RNA using the four ribonucleoside triphosphates as substrates. This is DNA-directed RNA polymerase subunit alpha from Dehalococcoides mccartyi (strain ATCC BAA-2266 / KCTC 15142 / 195) (Dehalococcoides ethenogenes (strain 195)).